The chain runs to 287 residues: MHSKPQWLRAKAPTGEVFNETLNIVKLHNLHTVCEEAACPNIGECWNKRHATVMILGSVCTRACAFCNVATGIPDKLDPHEPENLAKAIKKLNLKHVVITSVDRDDLPDGGANQFIQCIEEIRKITSETTIEILTPDFLNKKGAFEAIAVASPDVYNHNIETVPRLYAKIRPRARYFHSLYLLKMVKQINPKVFTKSGLMVGLGETKEEILQVMDDLRSAEVDFITIGQYLQPTPKHAKLDRYVTPEEFEHYKYIAYSKGFLVVASSPLTRSSYHAEEDFNRLKACR.

Residues Cys34, Cys39, Cys45, Cys60, Cys64, Cys67, and Ser273 each coordinate [4Fe-4S] cluster. One can recognise a Radical SAM core domain in the interval 46–262 (WNKRHATVMI…KYIAYSKGFL (217 aa)).

Belongs to the radical SAM superfamily. Lipoyl synthase family. Requires [4Fe-4S] cluster as cofactor.

It localises to the cytoplasm. The enzyme catalyses [[Fe-S] cluster scaffold protein carrying a second [4Fe-4S](2+) cluster] + N(6)-octanoyl-L-lysyl-[protein] + 2 oxidized [2Fe-2S]-[ferredoxin] + 2 S-adenosyl-L-methionine + 4 H(+) = [[Fe-S] cluster scaffold protein] + N(6)-[(R)-dihydrolipoyl]-L-lysyl-[protein] + 4 Fe(3+) + 2 hydrogen sulfide + 2 5'-deoxyadenosine + 2 L-methionine + 2 reduced [2Fe-2S]-[ferredoxin]. Its pathway is protein modification; protein lipoylation via endogenous pathway; protein N(6)-(lipoyl)lysine from octanoyl-[acyl-carrier-protein]: step 2/2. In terms of biological role, catalyzes the radical-mediated insertion of two sulfur atoms into the C-6 and C-8 positions of the octanoyl moiety bound to the lipoyl domains of lipoate-dependent enzymes, thereby converting the octanoylated domains into lipoylated derivatives. The sequence is that of Lipoyl synthase from Wolbachia pipientis wMel.